Here is a 341-residue protein sequence, read N- to C-terminus: Cell wall mannoprotein PIR1 (341 aa).

The N-terminal stretch at 1 to 18 is a signal peptide; sequence MQYKKSLVASALVATSLA. Positions 19–63 are excised as a propeptide; that stretch reads AYAPKDPWSTLTPSATYKGGITDYSSTFGIAVEPIATTASSKAKR. 8 PIR1/2/3 repeats span residues 64–82, 83–101, 102–125, 126–144, 145–163, 164–182, 183–201, and 202–220; these read AAAI…TKTT, AAAV…TKTK, AAAV…AKTT, AAAV…TKTT, AAAV…TNTT, and VAPV…TLTS.

It belongs to the PIR protein family. Covalently linked to beta-1,3-glucan of the inner cell wall layer via an alkali-sensitive ester linkage between the gamma-carboxyl group of glutamic acids, arising from specific glutamines within the PIR1/2/3 repeats, and hydroxyl groups of glucoses of beta-1,3-glucan chains. In terms of processing, O-glycosylated. Extensively O-mannosylated.

Its subcellular location is the secreted. It is found in the cell wall. Functionally, component of the outer cell wall layer. Required for stability of the cell wall and for optimal growth. Required for resistance against several antifungal and cell wall-perturbing agents and for tolerance to heat shock. The polypeptide is Cell wall mannoprotein PIR1 (PIR1) (Saccharomyces cerevisiae (strain ATCC 204508 / S288c) (Baker's yeast)).